The following is a 162-amino-acid chain: Transcription antitermination protein RfaH (162 aa).

The protein belongs to the RfaH family. In terms of assembly, interacts with both the nontemplate DNA and the RNA polymerase (RNAP).

Its function is as follows. Enhances distal genes transcription elongation in a specialized subset of operons that encode extracytoplasmic components. RfaH is recruited into a multi-component RNA polymerase complex by the ops element, which is a short conserved DNA sequence located downstream of the main promoter of these operons. Once bound, RfaH suppresses pausing and inhibits Rho-dependent and intrinsic termination at a subset of sites. Termination signals are bypassed, which allows complete synthesis of long RNA chains. Also negatively controls expression and surface presentation of AG43 and possibly another AG43-independent factor that mediates cell-cell interactions and biofilm formation,. This is Transcription antitermination protein RfaH from Escherichia coli O6:K15:H31 (strain 536 / UPEC).